The sequence spans 901 residues: Putative serine/threonine-protein kinase YPL150W (901 aa).

Residues 41–287 (YKILKQIGEG…LSQVLRHPFL (247 aa)) form the Protein kinase domain. ATP is bound by residues 47 to 55 (IGEGSFGKV) and K70. The active-site Proton acceptor is D157. S456 bears the Phosphoserine mark. The segment at 500-530 (APSSGSFLKKNSGSIQKSRTDTVANPSRTES) is disordered. A Phosphoserine modification is found at S533. Residues 588–599 (SSISSEISQTST) are compositionally biased toward low complexity. 2 disordered regions span residues 588–629 (SSIS…NRPL) and 745–770 (TQRP…SSKR). Residues 600–613 (GNYDSESAENSRSI) show a composition bias toward polar residues. The span at 759–770 (RHGKNARRSSKR) shows a compositional bias: basic residues.

The protein belongs to the protein kinase superfamily. Ser/Thr protein kinase family.

It catalyses the reaction L-seryl-[protein] + ATP = O-phospho-L-seryl-[protein] + ADP + H(+). The catalysed reaction is L-threonyl-[protein] + ATP = O-phospho-L-threonyl-[protein] + ADP + H(+). Putative serine/threonine-protein kinase. This chain is Putative serine/threonine-protein kinase YPL150W, found in Saccharomyces cerevisiae (strain ATCC 204508 / S288c) (Baker's yeast).